A 96-amino-acid polypeptide reads, in one-letter code: Large ribosomal subunit protein uL23 (96 aa).

The protein belongs to the universal ribosomal protein uL23 family. In terms of assembly, part of the 50S ribosomal subunit. Contacts protein L29, and trigger factor when it is bound to the ribosome.

Its function is as follows. One of the early assembly proteins it binds 23S rRNA. One of the proteins that surrounds the polypeptide exit tunnel on the outside of the ribosome. Forms the main docking site for trigger factor binding to the ribosome. This chain is Large ribosomal subunit protein uL23, found in Nitratidesulfovibrio vulgaris (strain DSM 19637 / Miyazaki F) (Desulfovibrio vulgaris).